Here is a 167-residue protein sequence, read N- to C-terminus: Caffeine dehydrogenase subunit gamma (167 aa).

In terms of domain architecture, 2Fe-2S ferredoxin-type spans 4–80; sequence HVISLTVNGQ…GHSIRTVEAL (77 aa). [2Fe-2S] cluster is bound by residues cysteine 42, cysteine 47, cysteine 50, and cysteine 62.

As to quaternary structure, heterotrimer composed of an alpha (CdhA), a beta (CdhB) and a gamma (CdhC) subunit.

It carries out the reaction caffeine + a ubiquinone + H2O = 1,3,7-trimethylurate + a ubiquinol. The catalysed reaction is ubiquinone-0 + caffeine + H2O = ubiquinol-0 + 1,3,7-trimethylurate. The enzyme catalyses theobromine + a ubiquinone + H2O = 3,7-dimethylurate + a ubiquinol. In terms of biological role, component of the caffeine dehydrogenase complex that catalyzes the hydrolytical oxidation of 1,3,7-trimethylxanthine (caffeine) by incorporation of an oxygen atom originating from a water molecule into position C-8 to produce 1,3,7-trimethyluric acid (TMU). Coenzyme Q0 (ubiquinone-0) is the preferred electron acceptor and, to a lesser extent, coenzyme Q2 (ubiquinone-2) can also be used, but oxygen and NAD(P)(+) cannot. Is involved in a caffeine degradation pathway that allows Pseudomonas sp. strain CBB1 to grow on caffeine as the sole carbon and nitrogen source. Is also active with theobromine as substrate, but shows a very poor activity with theophylline and is not active with xanthine, 3-methylxanthine, 7-methylxanthine, TMU, and 3,7-dimethylurate. The chain is Caffeine dehydrogenase subunit gamma from Pseudomonas sp. (strain CBB1).